The chain runs to 343 residues: KRR1 small subunit processome component homolog (343 aa).

One can recognise a KH domain in the interval 126–194 (DIIKIGNLVH…VRDIVLETMN (69 aa)). Residues 230–246 (KNKNISKRKQPKNKKPK) are compositionally biased toward basic residues. The segment at 230–343 (KNKNISKRKQ…LMKANKKNRS (114 aa)) is disordered. Basic and acidic residues-rich tracts occupy residues 272 to 303 (LNKEQKQAKKQQERSVKQAEAAKKQDERRNKD) and 318 to 331 (RPAETSKVDVDALK). Residues 272–341 (LNKEQKQAKK…AKLMKANKKN (70 aa)) adopt a coiled-coil conformation. A compositionally biased stretch (basic residues) spans 333–343 (KLMKANKKNRS).

Belongs to the KRR1 family. In terms of assembly, monomer. Component of the ribosomal small subunit (SSU) processome.

It localises to the nucleus. It is found in the nucleolus. Required for 40S ribosome biogenesis. Involved in nucleolar processing of pre-18S ribosomal RNA and ribosome assembly. Binds to RNA. Required for female germline development, cell viability during eye development and for survival of dividing cells and epithelial cells during early wing disk development. This chain is KRR1 small subunit processome component homolog, found in Drosophila virilis (Fruit fly).